A 257-amino-acid polypeptide reads, in one-letter code: 3-deoxy-manno-octulosonate cytidylyltransferase (257 aa).

This sequence belongs to the KdsB family.

It is found in the cytoplasm. It carries out the reaction 3-deoxy-alpha-D-manno-oct-2-ulosonate + CTP = CMP-3-deoxy-beta-D-manno-octulosonate + diphosphate. It participates in nucleotide-sugar biosynthesis; CMP-3-deoxy-D-manno-octulosonate biosynthesis; CMP-3-deoxy-D-manno-octulosonate from 3-deoxy-D-manno-octulosonate and CTP: step 1/1. Its pathway is bacterial outer membrane biogenesis; lipopolysaccharide biosynthesis. In terms of biological role, activates KDO (a required 8-carbon sugar) for incorporation into bacterial lipopolysaccharide in Gram-negative bacteria. This chain is 3-deoxy-manno-octulosonate cytidylyltransferase, found in Methylococcus capsulatus (strain ATCC 33009 / NCIMB 11132 / Bath).